The sequence spans 55 residues: Large ribosomal subunit protein uL15 (55 aa).

It belongs to the universal ribosomal protein uL15 family. As to quaternary structure, part of the 50S ribosomal subunit.

In terms of biological role, binds to the 23S rRNA. This chain is Large ribosomal subunit protein uL15 (rplO), found in Lactococcus lactis subsp. cremoris (Streptococcus cremoris).